The chain runs to 220 residues: UPF0319 protein Ent638_1476 (220 aa).

The signal sequence occupies residues 1–20; that stretch reads MKTGIVSAVLALVMPVCVYA.

It belongs to the UPF0319 family.

This chain is UPF0319 protein Ent638_1476, found in Enterobacter sp. (strain 638).